A 438-amino-acid chain; its full sequence is High-affinity gluconate transporter (438 aa).

13 helical membrane-spanning segments follow: residues 2 to 22, 23 to 43, 52 to 72, 108 to 128, 134 to 154, 174 to 194, 222 to 242, 258 to 278, 292 to 312, 327 to 347, 349 to 369, 370 to 390, and 418 to 438; these read PLVI…RFKM, NGFI…GMPL, AGVG…AMLG, VGFA…VFTI, IPLL…HGFL, TLLY…PVYA, FGVS…RAIA, FLGD…FTFG, LVSS…GGAF, SMMH…AAVL, IALG…APLI, ATTG…SVIF, and MLET…NMVI.

The protein belongs to the GntP permease family.

It localises to the cell inner membrane. The protein operates within carbohydrate acid metabolism; D-gluconate degradation. In terms of biological role, part of the gluconate utilization system Gnt-I; high-affinity intake of gluconate. The chain is High-affinity gluconate transporter (gntT) from Escherichia coli (strain K12).